Here is a 291-residue protein sequence, read N- to C-terminus: Formamidopyrimidine-DNA glycosylase (291 aa).

Pro-2 (schiff-base intermediate with DNA) is an active-site residue. Glu-3 acts as the Proton donor in catalysis. Lys-58 functions as the Proton donor; for beta-elimination activity in the catalytic mechanism. DNA is bound by residues His-100, Arg-123, and Lys-166. The segment at 257-291 (SVYGREGKECLQCGTPIIRILQSGRSSFYCSQCQK) adopts an FPG-type zinc-finger fold. The active-site Proton donor; for delta-elimination activity is Arg-281.

It belongs to the FPG family. As to quaternary structure, monomer. Zn(2+) is required as a cofactor.

The catalysed reaction is Hydrolysis of DNA containing ring-opened 7-methylguanine residues, releasing 2,6-diamino-4-hydroxy-5-(N-methyl)formamidopyrimidine.. It catalyses the reaction 2'-deoxyribonucleotide-(2'-deoxyribose 5'-phosphate)-2'-deoxyribonucleotide-DNA = a 3'-end 2'-deoxyribonucleotide-(2,3-dehydro-2,3-deoxyribose 5'-phosphate)-DNA + a 5'-end 5'-phospho-2'-deoxyribonucleoside-DNA + H(+). In terms of biological role, involved in base excision repair of DNA damaged by oxidation or by mutagenic agents. Acts as a DNA glycosylase that recognizes and removes damaged bases. Has a preference for oxidized purines, such as 7,8-dihydro-8-oxoguanine (8-oxoG). Has AP (apurinic/apyrimidinic) lyase activity and introduces nicks in the DNA strand. Cleaves the DNA backbone by beta-delta elimination to generate a single-strand break at the site of the removed base with both 3'- and 5'-phosphates. This chain is Formamidopyrimidine-DNA glycosylase, found in Bartonella tribocorum (strain CIP 105476 / IBS 506).